Consider the following 307-residue polypeptide: 2-phospho-L-lactate transferase (307 aa).

7,8-didemethyl-8-hydroxy-5-deazariboflavin is bound by residues D48 and K87.

Belongs to the CofD family. Homodimer. Requires Mg(2+) as cofactor.

It catalyses the reaction (2S)-lactyl-2-diphospho-5'-guanosine + 7,8-didemethyl-8-hydroxy-5-deazariboflavin = oxidized coenzyme F420-0 + GMP + H(+). It participates in cofactor biosynthesis; coenzyme F420 biosynthesis. In terms of biological role, catalyzes the transfer of the 2-phospholactate moiety from (2S)-lactyl-2-diphospho-5'-guanosine to 7,8-didemethyl-8-hydroxy-5-deazariboflavin (FO) with the formation of oxidized coenzyme F420-0 and GMP. This chain is 2-phospho-L-lactate transferase, found in Methanosarcina acetivorans (strain ATCC 35395 / DSM 2834 / JCM 12185 / C2A).